The primary structure comprises 88 residues: Large ribosomal subunit protein bL27 (88 aa).

The disordered stretch occupies residues 1–24 (MATKKSGGSSGNGRDSRGRRLGVK).

It belongs to the bacterial ribosomal protein bL27 family.

This is Large ribosomal subunit protein bL27 from Ehrlichia canis (strain Jake).